A 370-amino-acid chain; its full sequence is Coproporphyrin III ferrochelatase (370 aa).

Positions 58 and 127 each coordinate Fe-coproporphyrin III. Fe(2+) contacts are provided by His189 and Glu276.

Belongs to the ferrochelatase family.

It is found in the cytoplasm. It catalyses the reaction Fe-coproporphyrin III + 2 H(+) = coproporphyrin III + Fe(2+). The protein operates within porphyrin-containing compound metabolism; protoheme biosynthesis. In terms of biological role, involved in coproporphyrin-dependent heme b biosynthesis. Catalyzes the insertion of ferrous iron into coproporphyrin III to form Fe-coproporphyrin III. This Corynebacterium glutamicum (strain R) protein is Coproporphyrin III ferrochelatase.